A 440-amino-acid chain; its full sequence is Ferreportin (440 aa).

Residues Met1–Arg8 lie on the Cytoplasmic side of the membrane. The helical transmembrane segment at Ile9–Ile38 threads the bilayer. Ca(2+) is bound at residue Asp24. Residues Phe39–Lys42 lie on the Extracellular side of the membrane. A helical transmembrane segment spans residues Leu43–Asp69. Over Thr70 to Pro72 the chain is Cytoplasmic. Residues Arg73–Arg103 traverse the membrane as a helical segment. Gln84 serves as a coordination point for Ca(2+). At Ala104 to Ser109 the chain is on the extracellular side. Residues Trp110–Leu145 form a helical membrane-spanning segment. At Val146–Ala147 the chain is on the cytoplasmic side. Residues Pro148 to Leu176 traverse the membrane as a helical segment. At Phe177–Leu186 the chain is on the extracellular side. The helical transmembrane segment at Ala187 to Arg213 threads the bilayer. Ca(2+) is bound by residues Asn196 and Glu203. The Cytoplasmic portion of the chain corresponds to Ser214–Pro242. A helical membrane pass occupies residues Ile243–Asp271. Residues Glu272–Pro276 are Extracellular-facing. The chain crosses the membrane as a helical span at residues Glu277–Arg304. Over Leu305–Gly306 the chain is Cytoplasmic. The chain crosses the membrane as a helical span at residues Leu307 to Phe329. Over Ala330 to Ala335 the chain is Extracellular. Residues Ser336–Leu365 traverse the membrane as a helical segment. The Cytoplasmic segment spans residues Ile366–Arg370. The helical transmembrane segment at Arg371 to Leu395 threads the bilayer. Over Leu396 to Gln398 the chain is Extracellular. Residues Thr399–Ser424 form a helical membrane-spanning segment. Residues Ser425–Ser440 lie on the Cytoplasmic side of the membrane.

It belongs to the ferroportin (FP) (TC 2.A.100) family. Ca(2+) serves as cofactor.

The protein localises to the cell membrane. Iron transpoter that exports Fe(2+) from the cell. Also binds to Co(2+) and Ni(2+). May act as a multivalent divalent metal transporter. The transporter is composed of 12 transmembrane (TM) helices organized into N-terminal (TM1-6) and C-terminal (TM7-12) domains. The substrate-binding site is formed at the interface of the two domains and is alternately accessible from either side of the membrane. The transport cycle is viewed as a series of ligand-induced conformational changes that include open outward and open inward states. The sequence is that of Ferreportin (slc39) from Bdellovibrio bacteriovorus (strain ATCC 15356 / DSM 50701 / NCIMB 9529 / HD100).